Reading from the N-terminus, the 279-residue chain is MTSENMAILFEVLQYMKEFREKTFVVKVGGAALEKEEAKTSFAKSIVFLRHVQVNPIIVHGGGVEITRLMNQLGIKPLFKNGYRVTDEKTLQIAEMVLEKINKDIVLKINLHGGRAIGVSGKDDNLLLCEKDIANGDIGYVGKIRKVNSGFIEKLIAQNYIPVICPVGFGEDGTTYNINADVAAAEIAISLKAEKLIFVSDVPGVMKDGELIPYLDVRNARKLIEEGVVKGGMIPKIQCAVNALKAGIKSVHVVNGEIPHALLTEIFTLHGIGTMLREI.

Substrate contacts are provided by residues 62-63 (GG), arginine 84, and asparagine 177.

It belongs to the acetylglutamate kinase family. ArgB subfamily.

The protein resides in the cytoplasm. The enzyme catalyses N-acetyl-L-glutamate + ATP = N-acetyl-L-glutamyl 5-phosphate + ADP. It participates in amino-acid biosynthesis; L-arginine biosynthesis; N(2)-acetyl-L-ornithine from L-glutamate: step 2/4. Catalyzes the ATP-dependent phosphorylation of N-acetyl-L-glutamate. This Pseudothermotoga lettingae (strain ATCC BAA-301 / DSM 14385 / NBRC 107922 / TMO) (Thermotoga lettingae) protein is Acetylglutamate kinase.